We begin with the raw amino-acid sequence, 237 residues long: Leucyl/phenylalanyl-tRNA--protein transferase (237 aa).

It belongs to the L/F-transferase family.

Its subcellular location is the cytoplasm. The enzyme catalyses N-terminal L-lysyl-[protein] + L-leucyl-tRNA(Leu) = N-terminal L-leucyl-L-lysyl-[protein] + tRNA(Leu) + H(+). The catalysed reaction is N-terminal L-arginyl-[protein] + L-leucyl-tRNA(Leu) = N-terminal L-leucyl-L-arginyl-[protein] + tRNA(Leu) + H(+). It carries out the reaction L-phenylalanyl-tRNA(Phe) + an N-terminal L-alpha-aminoacyl-[protein] = an N-terminal L-phenylalanyl-L-alpha-aminoacyl-[protein] + tRNA(Phe). Functionally, functions in the N-end rule pathway of protein degradation where it conjugates Leu, Phe and, less efficiently, Met from aminoacyl-tRNAs to the N-termini of proteins containing an N-terminal arginine or lysine. The protein is Leucyl/phenylalanyl-tRNA--protein transferase (aat) of Vibrio vulnificus (strain CMCP6).